The chain runs to 414 residues: Probable aminotransferase TAT2 (414 aa).

This sequence belongs to the class-I pyridoxal-phosphate-dependent aminotransferase family. Pyridoxal 5'-phosphate is required as a cofactor.

This chain is Probable aminotransferase TAT2, found in Arabidopsis thaliana (Mouse-ear cress).